A 349-amino-acid polypeptide reads, in one-letter code: UDP-N-acetylenolpyruvoylglucosamine reductase (349 aa).

An FAD-binding PCMH-type domain is found at 25–197 (GIAARARFAA…VAVTFRLPKQ (173 aa)). R173 is an active-site residue. S249 acts as the Proton donor in catalysis. The active site involves E345.

The protein belongs to the MurB family. FAD is required as a cofactor.

Its subcellular location is the cytoplasm. The enzyme catalyses UDP-N-acetyl-alpha-D-muramate + NADP(+) = UDP-N-acetyl-3-O-(1-carboxyvinyl)-alpha-D-glucosamine + NADPH + H(+). Its pathway is cell wall biogenesis; peptidoglycan biosynthesis. Functionally, cell wall formation. In Burkholderia cenocepacia (strain HI2424), this protein is UDP-N-acetylenolpyruvoylglucosamine reductase.